Here is a 187-residue protein sequence, read N- to C-terminus: Adenylate kinase (187 aa).

Position 10 to 15 (10 to 15 (GSGKGT)) interacts with ATP. The interval 30–59 (STGDLLRSEVVAGTPLGLQAKQVMAQGDLV) is NMP. AMP is bound by residues threonine 31, arginine 36, 57–59 (DLV), 85–88 (GYPR), and glutamine 92. The LID stretch occupies residues 126 to 136 (GRAQAEGREDD). Arginine 127 is a binding site for ATP. Residues arginine 133 and arginine 144 each contribute to the AMP site. Glycine 172 serves as a coordination point for ATP.

This sequence belongs to the adenylate kinase family. Monomer.

It localises to the cytoplasm. It catalyses the reaction AMP + ATP = 2 ADP. Its pathway is purine metabolism; AMP biosynthesis via salvage pathway; AMP from ADP: step 1/1. Functionally, catalyzes the reversible transfer of the terminal phosphate group between ATP and AMP. Plays an important role in cellular energy homeostasis and in adenine nucleotide metabolism. The chain is Adenylate kinase from Xylella fastidiosa (strain M23).